Here is a 568-residue protein sequence, read N- to C-terminus: Hexose transporter 1 (568 aa).

Over 1–32 (MATEEMREKSLKREAESLWDIPPESYASKACS) the chain is Cytoplasmic. A helical membrane pass occupies residues 33-53 (CMGTAAQLVMVAVLGSFQFGF). The Extracellular segment spans residues 54–86 (NLSALNTSKAFIILDFGWCKDENGGHYSDCDTG). Cysteine 72 and cysteine 83 form a disulfide bridge. The chain crosses the membrane as a helical span at residues 87–107 (LVYGSLINTAVFLGACVGCLL). Residues 108-119 (GGRLTDFGRRAS) are Cytoplasmic-facing. The helical transmembrane segment at 120–140 (LIFTHCVCTLGCILSAAAEGF) threads the bilayer. The Extracellular segment spans residues 141–142 (PT). The chain crosses the membrane as a helical span at residues 143-163 (LLIARLVVGVAVGMFTVCVPM). Over 164–182 (YLSEVTPDDRRGYFGTFHQ) the chain is Cytoplasmic. Glutamine 182 is an alpha-D-glucose binding site. Position 182 (glutamine 182) interacts with beta-D-glucose. Residues 183-203 (LFITLGIFFGTLLGLAFGNAP) traverse the membrane as a helical segment. Topologically, residues 204 to 220 (AGDEVYEVSTFQQAWWR) are extracellular. The helical transmembrane segment at 221–241 (VMLGLPAVVSLLAIWLLWFVF) threads the bilayer. The Cytoplasmic segment spans residues 242–306 (PFETPQYMVE…KAIVHPTYRS (65 aa)). A helical membrane pass occupies residues 307-327 (VILLACLLSIMQQFTGINVLV). Positions 318, 319, and 324 each coordinate alpha-D-glucose. Glutamine 318 contributes to the beta-D-glucose binding site. Residue asparagine 324 coordinates beta-D-glucose. Residues 328 to 345 (ANSNNLYSSLKLPQDAVT) lie on the Extracellular side of the membrane. A helical membrane pass occupies residues 346 to 366 (GLTVGFTALNVFLTVITIPLV). Asparagine 355 is a beta-D-glucose binding site. The Cytoplasmic segment spans residues 367–374 (DRLGRRTL). The chain crosses the membrane as a helical span at residues 375–395 (LLFSEAVMFVAMGIAFVANLV). At 396–406 (DQSNTAVQWVT) the chain is on the extracellular side. A helical membrane pass occupies residues 407-427 (VACVYVFIVGFAVGYGPVLWI). Tryptophan 426 contacts alpha-D-glucose. At 428–443 (YIHEIFPPEIKQGAAS) the chain is on the cytoplasmic side. A helical transmembrane segment spans residues 444-464 (LASALNWVATVAIVLPSDFLL). The Extracellular portion of the chain corresponds to 465-469 (KQGFS). A helical transmembrane segment spans residues 470–490 (VFVGICTVALAIIFVVTFIFV). At 491–568 (KETKGLSIEE…DDLTKGTEVV (78 aa)) the chain is on the cytoplasmic side.

It belongs to the major facilitator superfamily. Sugar transporter (TC 2.A.1.1) family. Homodimer.

It localises to the cell membrane. It carries out the reaction D-glucose(out) = D-glucose(in). The enzyme catalyses D-fructose(out) = D-fructose(in). It catalyses the reaction D-galactose(in) = D-galactose(out). The catalysed reaction is D-mannose(out) = D-mannose(in). It carries out the reaction D-glucosamine(out) = D-glucosamine(in). The enzyme catalyses D-xylose(out) = D-xylose(in). With respect to regulation, inhibited by cytochalasin B. In terms of biological role, sodium-independent facilitative hexose transporter. Can transport D-glucose and D-mannose with high affinity, and D-fructose and D-galactose with low affinity. Can transport D-xylose and D-glucosamine. This Toxoplasma gondii protein is Hexose transporter 1.